The primary structure comprises 399 residues: Probable aspartate/prephenate aminotransferase (399 aa).

Positions 39, 125, and 175 each coordinate L-aspartate. Lysine 239 is subject to N6-(pyridoxal phosphate)lysine. Arginine 375 contacts L-aspartate.

The protein belongs to the class-I pyridoxal-phosphate-dependent aminotransferase family. In terms of assembly, homodimer. It depends on pyridoxal 5'-phosphate as a cofactor.

The protein resides in the cytoplasm. It catalyses the reaction L-aspartate + 2-oxoglutarate = oxaloacetate + L-glutamate. It carries out the reaction L-arogenate + 2-oxoglutarate = prephenate + L-glutamate. Its function is as follows. Catalyzes the reversible conversion of aspartate and 2-oxoglutarate to glutamate and oxaloacetate. Can also transaminate prephenate in the presence of glutamate. This Rickettsia bellii (strain RML369-C) protein is Probable aspartate/prephenate aminotransferase (aatA).